Reading from the N-terminus, the 315-residue chain is tRNA pseudouridine synthase B (315 aa).

Asp54 functions as the Nucleophile in the catalytic mechanism.

This sequence belongs to the pseudouridine synthase TruB family. Type 1 subfamily.

The catalysed reaction is uridine(55) in tRNA = pseudouridine(55) in tRNA. Its function is as follows. Responsible for synthesis of pseudouridine from uracil-55 in the psi GC loop of transfer RNAs. The polypeptide is tRNA pseudouridine synthase B (Cupriavidus taiwanensis (strain DSM 17343 / BCRC 17206 / CCUG 44338 / CIP 107171 / LMG 19424 / R1) (Ralstonia taiwanensis (strain LMG 19424))).